We begin with the raw amino-acid sequence, 248 residues long: 3-oxoacyl-[acyl-carrier-protein] reductase FabG (248 aa).

NADP(+)-binding positions include 14 to 17 (GGSR), 65 to 66 (DV), and Asn92. Ser144 provides a ligand contact to substrate. The Proton acceptor role is filled by Tyr157. NADP(+) contacts are provided by residues 157 to 161 (YAAAK) and Ile190.

It belongs to the short-chain dehydrogenases/reductases (SDR) family. As to quaternary structure, homotetramer.

The catalysed reaction is a (3R)-hydroxyacyl-[ACP] + NADP(+) = a 3-oxoacyl-[ACP] + NADPH + H(+). Its pathway is lipid metabolism; fatty acid biosynthesis. Its function is as follows. Catalyzes the NADPH-dependent reduction of beta-ketoacyl-ACP substrates to beta-hydroxyacyl-ACP products, the first reductive step in the elongation cycle of fatty acid biosynthesis. The chain is 3-oxoacyl-[acyl-carrier-protein] reductase FabG (fabG) from Chlamydia trachomatis serovar D (strain ATCC VR-885 / DSM 19411 / UW-3/Cx).